Reading from the N-terminus, the 619-residue chain is Translation initiation factor IF-2 (619 aa).

Residues proline 120–tyrosine 289 form the tr-type G domain. The interval glycine 129 to threonine 136 is G1. Glycine 129–threonine 136 contributes to the GTP binding site. The tract at residues glycine 154–lysine 158 is G2. The interval aspartate 176–glycine 179 is G3. GTP contacts are provided by residues aspartate 176 to histidine 180 and asparagine 230 to aspartate 233. The tract at residues asparagine 230–aspartate 233 is G4. The G5 stretch occupies residues serine 266–leucine 268.

The protein belongs to the TRAFAC class translation factor GTPase superfamily. Classic translation factor GTPase family. IF-2 subfamily.

Its subcellular location is the cytoplasm. Functionally, one of the essential components for the initiation of protein synthesis. Protects formylmethionyl-tRNA from spontaneous hydrolysis and promotes its binding to the 30S ribosomal subunits. Also involved in the hydrolysis of GTP during the formation of the 70S ribosomal complex. In Mycoplasma genitalium (strain ATCC 33530 / DSM 19775 / NCTC 10195 / G37) (Mycoplasmoides genitalium), this protein is Translation initiation factor IF-2 (infB).